Consider the following 240-residue polypeptide: MAEPGRPWAQARSAYRASEVLRRGTGRRRDPGPQSNGPGQEDARAPGRMARLRGQLRAEAASRSEVPRLLKLVERAGAGAAGRGREDRRAQPRAPCARYAGSPAAGPPTRRGSWRSASGGCRRAWRQCARSWAPGLRRCARSFERSWMPCARCCRRRRPRLPAASPAPSPAPRPAARPCRGRSAPLAPWSPPPGPQTTPRTAQQNAERTEPRPGRTTRRCQCRLGPRKVAGTEGGRTRAA.

2 disordered regions span residues Met-1 to Ala-117 and Leu-161 to Ala-240. Composition is skewed to basic and acidic residues over residues Glu-19–Pro-31 and Ala-60–Glu-74. Positions Ser-165–Ala-175 are enriched in pro residues. Low complexity predominate over residues Ala-176–Ala-187.

The protein belongs to the FAM246 family.

In Homo sapiens (Human), this protein is Protein FAM246C.